The primary structure comprises 779 residues: MGFASASREEKLKMMKTNKTRKTTKNLNRLAKKKKLSREIRDGMSDIKARKSADLRQRAVNIEDDFIADREARYENDDEEDLPLDMMDADIDWENSAFANAKRRLDRKRNGGADSDEDEDEDDVETKKRKFAGQLEEGHEELLPIKLKDGTLIRPTREKEVEEQEEEEKSDIDEGEEDEPHKEDFSHLSASELITKRRELLQEFKDTIASHANMLLANPQVNIVRLRDLYNLCNGEKVHSLVREPVQKLAMASTLQVLLDIVPGYAIREQTAEEKSQKQKKETRNLVNFEESLLRYHLKYLQLCEKLSNKLVGKDRHNDENTFTFKMGILSVKALARIVISAPHFNYSTNIISSLVRLSLAKNETVVKEVCDAIRTVFKELHLKITLFTSRSISTLVTKRKGRVSPELLKTLLSMNITEVANEDKKSGKDALIAKKYQIKKERASKTAKKYKKQLARLEADLLEVEAEESLTKKMKHATEAMKFAFQTYFSVLKRMPSSALLEPVLEGLSKFAHLLSIEFYEDIVSTMENMVQNENLKPLDQLHCINTVFVILSGDGQLLNIDPSKFYRLAYRVLNHFPFEKRPEQRKNQIVMAAKTLETMLVTRRKAVPLSRVAAFVKRLLSIATVLDDFPALCIVSLVRSLFIAHPKLSSMIEDEEGGAPGVFRQDIDDPDVANALASDVRDELSMLARRRNVELSRFANNILYGVPSTGIFKLNPQLSSLKPWILMGQLTDNAKEAYDRVETKYLDELEKTAKKRNQTVTPKNINFHISNWLTVAK.

2 disordered regions span residues 1–20 and 100–189; these read MGFA…TNKT and NAKR…SHLS. The segment covering 114–124 has biased composition (acidic residues); that stretch reads DSDEDEDEDDV. Over residues 136-160 the composition is skewed to basic and acidic residues; the sequence is EEGHEELLPIKLKDGTLIRPTREKE. A compositionally biased stretch (acidic residues) spans 161-178; sequence VEEQEEEEKSDIDEGEED. The stretch at 434-474 forms a coiled coil; sequence AKKYQIKKERASKTAKKYKKQLARLEADLLEVEAEESLTKK.

Belongs to the CBF/MAK21 family.

The protein localises to the nucleus. The protein resides in the nucleolus. This chain is Nucleolar complex protein 3 homolog, found in Caenorhabditis briggsae.